The following is a 403-amino-acid chain: Peroxisomal membrane protein PEX13 (403 aa).

Over residues 1–11 (MASQPPPPPKP) the composition is skewed to pro residues. A disordered region spans residues 1 to 69 (MASQPPPPPK…SQQTGSGNLN (69 aa)). At 1 to 134 (MASQPPPPPK…SSRGAFQSIE (134 aa)) the chain is on the peroxisomal matrix side. Residues 59–69 (PSQQTGSGNLN) show a composition bias toward polar residues. The helical transmembrane segment at 135 to 155 (SIVHAFASVSMMMDATFSAVY) threads the bilayer. The targeting to peroxisomes stretch occupies residues 145 to 233 (MMMDATFSAV…EDRAANSAKS (89 aa)). The Cytoplasmic segment spans residues 156–174 (NSFRAVLDVANHFSRLKIH). The helical transmembrane segment at 175–192 (FTKVFSAFALVRTIRYLY) threads the bilayer. The interval 175–196 (FTKVFSAFALVRTIRYLYRRLQ) is interaction with PEX19. Topologically, residues 193–233 (RRLQWMIGLRRGLENEDLWAESEGTVACLGAEDRAANSAKS) are peroxisomal matrix. A helical transmembrane segment spans residues 234–254 (WPIFLFFAVILGGPYLIWKLL). Residues 255-403 (STHSDEVTDS…TGKNGDKQDL (149 aa)) are Cytoplasmic-facing. The SH3 domain maps to 272 to 336 (DDHVVARAEY…PANYVKILGK (65 aa)). Residue Ser-354 is modified to Phosphoserine.

Belongs to the peroxin-13 family. In terms of assembly, interacts (via SH3 domain) with PEX14 (via SH3-binding motif); forming the PEX13-PEX14 docking complex. Interacts with PEX19.

It is found in the peroxisome membrane. Component of the PEX13-PEX14 docking complex, a translocon channel that specifically mediates the import of peroxisomal cargo proteins bound to PEX5 receptor. The PEX13-PEX14 docking complex forms a large import pore which can be opened to a diameter of about 9 nm. Mechanistically, PEX5 receptor along with cargo proteins associates with the PEX14 subunit of the PEX13-PEX14 docking complex in the cytosol, leading to the insertion of the receptor into the organelle membrane with the concomitant translocation of the cargo into the peroxisome matrix. Involved in the import of PTS1- and PTS2-type containing proteins. This is Peroxisomal membrane protein PEX13 (PEX13) from Bos taurus (Bovine).